Consider the following 183-residue polypeptide: Ribonuclease M5 (183 aa).

Residues 6 to 90 enclose the Toprim domain; it reads KEVIVVEGKD…AYISRVSGTK (85 aa). Mg(2+) contacts are provided by E12, D59, and D61.

The protein belongs to the ribonuclease M5 family. Requires Mg(2+) as cofactor.

It localises to the cytoplasm. The enzyme catalyses Endonucleolytic cleavage of RNA, removing 21 and 42 nucleotides, respectively, from the 5'- and 3'-termini of a 5S-rRNA precursor.. Required for correct processing of both the 5' and 3' ends of 5S rRNA precursor. Cleaves both sides of a double-stranded region yielding mature 5S rRNA in one step. This chain is Ribonuclease M5, found in Fusobacterium nucleatum subsp. nucleatum (strain ATCC 25586 / DSM 15643 / BCRC 10681 / CIP 101130 / JCM 8532 / KCTC 2640 / LMG 13131 / VPI 4355).